Consider the following 1196-residue polypeptide: DNA excision repair protein ERCC-5 homolog (1196 aa).

The tract at residues 1 to 78 is N-domain; that stretch reads MGVQGLWKLL…RIRPIFVFDG (78 aa). D30 provides a ligand contact to Mg(2+). The segment at 31–67 is DNA-binding; may bind to the undamaged single-strand DNA of the DNA repair bubble; the sequence is ISIWLNQAVKGARDRQGNAIQNAHLLTLFHRLCKLLF. D77 serves as a coordination point for Mg(2+). A spacer region region spans residues 79-818; that stretch reads EAPLLKRQTL…LQLFGIPYIV (740 aa). Disordered stretches follow at residues 152 to 176, 302 to 321, 629 to 661, and 722 to 758; these read PLED…MNQK, KQEE…NSSQ, QTTQ…SSAM, and AVEE…DDVS. The span at 154-168 shows a compositional bias: acidic residues; that stretch reads EDNENNSSEEEEERE. A compositionally biased stretch (polar residues) spans 311–321; that stretch reads PPQSITFNSSQ. Positions 722-731 are enriched in polar residues; that stretch reads AVEEGNSGSQ. Basic and acidic residues predominate over residues 734-755; it reads PLEHDSGEPHEQSNSEESKDLD. Residues 819 to 914 are I-domain; sequence APMEAEAQCA…VSAMEILNEF (96 aa). Residues E822, E824, D843, and D845 each contribute to the Mg(2+) site. The tract at residues 853–869 is DNA-binding; may bind to the undamaged single-strand DNA of the DNA repair bubble; the sequence is HVYKNFFSQNKHVEYYQ. Residues 881 to 913 are DNA-binding; H2TH (helix-2turn-helix) motif which binds double-stranded DNA; it reads RSKLINLAYLLGSDYTEGIPTVGYVSAMEILNE. D894 lines the Mg(2+) pocket. The segment at 945 to 951 is DNA-binding; may bind double-stranded DNA; that stretch reads TKVKKKL. The tract at residues 1075-1196 is disordered; sequence CTNQRKGQKT…KTMKETVKRK (122 aa). The Nuclear localization signal 1 signature appears at 1079–1095; that stretch reads RKGQKTNTKSQGTKRRK. Residues 1119 to 1130 show a composition bias toward low complexity; sequence SSKAYSSDGSSS. A compositionally biased stretch (polar residues) spans 1142 to 1158; the sequence is KQSQSGIVGRQKASNKV. The short motif at 1179–1196 is the Nuclear localization signal 2 element; sequence FQGKKTKSKTMKETVKRK.

This sequence belongs to the XPG/RAD2 endonuclease family. XPG subfamily. Monomer. Homodimer. The cofactor is Mg(2+).

Its subcellular location is the nucleus. The protein localises to the chromosome. In terms of biological role, single-stranded structure-specific DNA endonuclease involved in DNA excision repair. Makes the 3'incision in DNA nucleotide excision repair (NER). Binds and bends DNA repair bubble substrate and breaks base stacking at the single-strand/double-strand DNA junction of the DNA bubble. Plays a role in base excision repair (BER) by promoting the binding of DNA glycosylase to its substrate and increasing DNA glycosylase catalytic activity that removes oxidized pyrimidines from DNA. Involved in transcription-coupled nucleotide excision repair (TCR) which allows RNA polymerase II-blocking lesions to be rapidly removed from the transcribed strand of active genes. Required for DNA replication fork maintenance and preservation of genomic stability. Involved in homologous recombination repair (HRR) induced by DNA replication stress. During HRR, binds to the replication fork with high specificity and stabilizes it. This Xenopus laevis (African clawed frog) protein is DNA excision repair protein ERCC-5 homolog (ercc5).